Here is a 549-residue protein sequence, read N- to C-terminus: MVSISKSLVADICVGSSPPTVRFVTLLENHDISNTTFPSLSGVLAQYGSSLQGPAGLQHVGLAQDQKYQHALTKGLKAVEKLQHFLDGPAPMSGDPVVLRCSSARSSTLLEITDETITSGPPCAGAAREREGITSFHRMKFHLPKHVGCVQDVHETSSQMLHLSCDGLRSEDTLFDRFGRWSRDHVTIVSGMCLFSDKIMRDAVQGDGKLDVSKLSSQEPTLYELEIIARSSSAIADVASHILGKNGAAKPIPLEIVLDAPSWHYFQVVHGNLASGHCTPAEALDWLQAVELRCEQVTTVFENSVRHEMGLRGVPAGFYHILAAPGTAGVGTSIRQALTSGMVPDIADCMDAICEVEGERWAMFYSLIPEKDRPCDFRSLGNLFYIYEVVRPALAAKNGSTAAELEVSGPNSALDDSSSSGHSDILDSALHLKANVERPLIMSIDDRAERKIYSKAQAFIKKIRRAPQIPSHPLLLELYSARRVFINGNTGGDSLYWNDSSPHPLRMNTTAGSPELEAFGVIRNLYGNDCAQNLQRWFSEAGVNVSGHT.

The Conserved DDXXE motif signature appears at 445 to 449 (DDRAE).

Belongs to the arginine-containing cyclodipeptide synthase family.

The catalysed reaction is L-prolyl-tRNA(Pro) + L-arginyl-tRNA(Arg) = cyclo(L-arginyl-L-prolyl) + tRNA(Pro) + tRNA(Arg) + 2 H(+). The protein operates within secondary metabolite biosynthesis. Arginine-containing cyclodipeptide synthase; part of the cluster that mediates the biosynthesis of a highly modified cyclo-arginine-proline dipeptide (cRP). Within the pathway, amaA acts as the scaffold-generating enzyme and is responsible for formation of the cyclo-Arg-Pro diketopiperazine (cRW) from L-arginyl-tRNA(Arg) + L-prolyl-tRNA(Pro). Additional enzymes from the cluster then further modify the cyclo-Arg-Pro diketopiperazine (cRW) scaffold. The protein is Arginine-containing cyclodipeptide synthase amaA of Apiospora montagnei (Sphaeria apiospora).